We begin with the raw amino-acid sequence, 588 residues long: ustiloxin B cluster transcription factor ustR (588 aa).

Residues 11–38 (CWTCRLRRKKCNEDGQPCSNCEARGVFC) constitute a DNA-binding region (zn(2)-C6 fungal-type). The segment at 68–92 (RTRRARATPTNSINGEPRRPSIDMN) is disordered.

The protein resides in the nucleus. Functionally, transcription factor that regulates the expression of the gene cluster that mediates the biosynthesis of ustiloxin B, an antimitotic tetrapeptide. This chain is ustiloxin B cluster transcription factor ustR, found in Aspergillus flavus (strain ATCC 200026 / FGSC A1120 / IAM 13836 / NRRL 3357 / JCM 12722 / SRRC 167).